The sequence spans 529 residues: Delayed-rectifier potassium channel regulatory subunit KCNS1 (529 aa).

Over 1–217 the chain is Cytoplasmic; it reads MLMLLVRGTH…LTMENPGYSL (217 aa). Residues 218–239 form a helical membrane-spanning segment; sequence PSKLFSCVSISVVLASIAAMCI. Residues 240 to 270 lie on the Extracellular side of the membrane; that stretch reads HSLPEYQAREAAAAVAAVAAGRSPEGVRDDP. The chain crosses the membrane as a helical span at residues 271 to 293; it reads VLRRLEYFCIAWFSFEVSSRLLL. Topologically, residues 294 to 304 are cytoplasmic; that stretch reads APSTRNFFCHP. Residues 305-322 form a helical membrane-spanning segment; sequence LNLIDIVSVLPFYLTLLA. The Extracellular portion of the chain corresponds to 323–340; it reads GVALGDQGGTGGKELGHL. The chain crosses the membrane as a helical; Voltage-sensor span at residues 341-361; the sequence is GKVVQVFRLMRIFRVLKLARH. Residues 362–376 lie on the Cytoplasmic side of the membrane; sequence STGLRSLGATLKHSY. A helical membrane pass occupies residues 377-398; the sequence is REVGILLLYLAVGVSVFSGVAY. The Extracellular portion of the chain corresponds to 399–411; it reads TAEKEEDVGFNTI. An intramembrane region (helical) is located at residues 412-423; it reads PACWWWGTVSMT. The Selectivity filter signature appears at 424–429; sequence TVGYGD. Residues 424–431 lie within the membrane without spanning it; the sequence is TVGYGDVV. Over 432–438 the chain is Extracellular; the sequence is PVTVAGK. A helical membrane pass occupies residues 439–467; sequence LAASGCILGGILVVALPITIIFNKFSHFY. Residues 468-529 are Cytoplasmic-facing; sequence RRQKALEAAV…PSEPPHPQMY (62 aa). Residues 494–529 form a disordered region; it reads GVSEASLETSRETSQEGRSADLETQAPSEPPHPQMY. The span at 502–514 shows a compositional bias: basic and acidic residues; the sequence is TSRETSQEGRSAD.

The protein belongs to the potassium channel family. S (TC 1.A.1.2) subfamily. Kv9.1/KCNS1 sub-subfamily. In terms of assembly, heterotetramer with KCNB1. Heterotetramer with KCNB2. Does not form homomultimers.

It is found in the cell membrane. Potassium channel regulatory subunit that modulate the delayed rectifier voltage-gated potassium channel activity of KCNB1 and KCNB2 by altering their kinetics, expression levels, and shifting the half-inactivation potential to more polarized values. While it does not form functional channels on its own, it can form functional heterotetrameric channels with KCNB1 and KCNB2. Each regulatory subunit has unique regulatory properties that can lead to extensive inhibition, significant changes in kinetics, and/or substantial shifts in the voltage dependencies of the inactivation process. This chain is Delayed-rectifier potassium channel regulatory subunit KCNS1, found in Chlorocebus aethiops (Green monkey).